Consider the following 338-residue polypeptide: Inositol 2-dehydrogenase (338 aa).

The protein belongs to the Gfo/Idh/MocA family. In terms of assembly, homotetramer.

It catalyses the reaction myo-inositol + NAD(+) = scyllo-inosose + NADH + H(+). Involved in the oxidation of myo-inositol (MI) to 2-keto-myo-inositol (2KMI or 2-inosose). The polypeptide is Inositol 2-dehydrogenase (Azotobacter vinelandii (strain DJ / ATCC BAA-1303)).